The primary structure comprises 287 residues: 4-diphosphocytidyl-2-C-methyl-D-erythritol kinase (287 aa).

Lys-14 is a catalytic residue. 96 to 106 (PWGAGLGGGSS) serves as a coordination point for ATP. The active site involves Asp-138.

The protein belongs to the GHMP kinase family. IspE subfamily.

The catalysed reaction is 4-CDP-2-C-methyl-D-erythritol + ATP = 4-CDP-2-C-methyl-D-erythritol 2-phosphate + ADP + H(+). The protein operates within isoprenoid biosynthesis; isopentenyl diphosphate biosynthesis via DXP pathway; isopentenyl diphosphate from 1-deoxy-D-xylulose 5-phosphate: step 3/6. Functionally, catalyzes the phosphorylation of the position 2 hydroxy group of 4-diphosphocytidyl-2C-methyl-D-erythritol. This Methylibium petroleiphilum (strain ATCC BAA-1232 / LMG 22953 / PM1) protein is 4-diphosphocytidyl-2-C-methyl-D-erythritol kinase.